The chain runs to 185 residues: NEDD8-conjugating enzyme UBE2F (185 aa).

Position 1 is an N-acetylmethionine (Met-1). One can recognise a UBC core domain in the interval 32-185 (VRDKLLVKEV…VDEYIKRYAR (154 aa)). Cys-116 functions as the Glycyl thioester intermediate in the catalytic mechanism.

Belongs to the ubiquitin-conjugating enzyme family. UBE2F subfamily. As to quaternary structure, interacts with UBA3 and RBX2. Interacts (N-terminally acetylated form) with (via DCUN1 domain) DCUN1D1, DCUN1D2, DCUN1D3, DCUN1D4 and DCUN1D5. The acetylation of Met-1 increases affinity for DCUN1D3 by about 2 orders of magnitude and is crucial for NEDD8 transfer to cullins.

The catalysed reaction is [E1 NEDD8-activating enzyme]-S-[NEDD8 protein]-yl-L-cysteine + [E2 NEDD8-conjugating enzyme]-L-cysteine = [E1 NEDD8-activating enzyme]-L-cysteine + [E2 NEDD8-conjugating enzyme]-S-[NEDD8-protein]-yl-L-cysteine.. It functions in the pathway protein modification; protein neddylation. Accepts the ubiquitin-like protein NEDD8 from the UBA3-NAE1 E1 complex and catalyzes its covalent attachment to other proteins. Together with the E3 ubiquitin ligase RNF7/RBX2, specifically neddylates cullin-5 (CUL5). Does not neddylate CUL1, CUL2, CUL3, CUL4A or CUL4B. Mediates neddylation of the CUL9-RBX1 complex. In Rattus norvegicus (Rat), this protein is NEDD8-conjugating enzyme UBE2F (Ube2f).